The chain runs to 120 residues: Large ribosomal subunit protein bL12 (120 aa).

A compositionally biased stretch (basic and acidic residues) spans 95 to 112 (KEGVSKEEAEEVQGKLEE). Residues 95 to 120 (KEGVSKEEAEEVQGKLEEAGASVEVK) are disordered.

The protein belongs to the bacterial ribosomal protein bL12 family. As to quaternary structure, homodimer. Part of the ribosomal stalk of the 50S ribosomal subunit. Forms a multimeric L10(L12)X complex, where L10 forms an elongated spine to which 2 to 4 L12 dimers bind in a sequential fashion. Binds GTP-bound translation factors.

Forms part of the ribosomal stalk which helps the ribosome interact with GTP-bound translation factors. Is thus essential for accurate translation. This is Large ribosomal subunit protein bL12 from Oceanobacillus iheyensis (strain DSM 14371 / CIP 107618 / JCM 11309 / KCTC 3954 / HTE831).